A 99-amino-acid chain; its full sequence is Nucleoid-associated protein EbfC (99 aa).

The protein belongs to the YbaB/EbfC family. In terms of assembly, homodimer.

It localises to the cytoplasm. It is found in the nucleoid. In terms of biological role, binds to DNA and alters its conformation. May be involved in regulation of gene expression, nucleoid organization and DNA protection. The sequence is that of Nucleoid-associated protein EbfC from Borreliella burgdorferi (strain ZS7) (Borrelia burgdorferi).